Consider the following 679-residue polypeptide: Methionine--tRNA ligase (679 aa).

A 'HIGH' region motif is present at residues 15–25 (PYANGPVHIGH). Zn(2+) is bound by residues Cys147, Cys150, Cys160, and Cys163. The 'KMSKS' region signature appears at 332–336 (KISTS). ATP is bound at residue Thr335. Residues 578 to 679 (DFMKLDIRVG…KEVKPGSEVK (102 aa)) form the tRNA-binding domain.

It belongs to the class-I aminoacyl-tRNA synthetase family. MetG type 1 subfamily. As to quaternary structure, homodimer. Zn(2+) serves as cofactor.

The protein resides in the cytoplasm. It carries out the reaction tRNA(Met) + L-methionine + ATP = L-methionyl-tRNA(Met) + AMP + diphosphate. Functionally, is required not only for elongation of protein synthesis but also for the initiation of all mRNA translation through initiator tRNA(fMet) aminoacylation. This is Methionine--tRNA ligase from Parabacteroides distasonis (strain ATCC 8503 / DSM 20701 / CIP 104284 / JCM 5825 / NCTC 11152).